Consider the following 284-residue polypeptide: Bifunctional protein FolD (284 aa).

NADP(+)-binding positions include 166–168 (GAS) and I232.

This sequence belongs to the tetrahydrofolate dehydrogenase/cyclohydrolase family. Homodimer.

It carries out the reaction (6R)-5,10-methylene-5,6,7,8-tetrahydrofolate + NADP(+) = (6R)-5,10-methenyltetrahydrofolate + NADPH. The catalysed reaction is (6R)-5,10-methenyltetrahydrofolate + H2O = (6R)-10-formyltetrahydrofolate + H(+). Its pathway is one-carbon metabolism; tetrahydrofolate interconversion. Catalyzes the oxidation of 5,10-methylenetetrahydrofolate to 5,10-methenyltetrahydrofolate and then the hydrolysis of 5,10-methenyltetrahydrofolate to 10-formyltetrahydrofolate. The protein is Bifunctional protein FolD of Shewanella sp. (strain W3-18-1).